The following is a 65-amino-acid chain: Large ribosomal subunit protein bL35 (65 aa).

The tract at residues 1 to 22 is disordered; it reads MPKIKTLRSAAKRFKKTASGKF. Basic residues predominate over residues 10–22; that stretch reads AAKRFKKTASGKF.

The protein belongs to the bacterial ribosomal protein bL35 family.

This is Large ribosomal subunit protein bL35 from Buchnera aphidicola subsp. Schizaphis graminum (strain Sg).